The sequence spans 372 residues: Chaperone protein DnaJ (372 aa).

One can recognise a J domain in the interval 5-69 (DYYEVLGLSK…QKKAQYDQFG (65 aa)). The CR-type zinc-finger motif lies at 129-211 (GAEKEISVKK…CGGTGRKVKT (83 aa)). The Zn(2+) site is built by Cys-142, Cys-145, Cys-159, Cys-162, Cys-185, Cys-188, Cys-199, and Cys-202. CXXCXGXG motif repeat units lie at residues 142-149 (CDTCDGSG), 159-166 (CSTCGGRG), 185-192 (CPDCGGTG), and 199-206 (CSDCGGTG).

The protein belongs to the DnaJ family. As to quaternary structure, homodimer. It depends on Zn(2+) as a cofactor.

The protein localises to the cytoplasm. Participates actively in the response to hyperosmotic and heat shock by preventing the aggregation of stress-denatured proteins and by disaggregating proteins, also in an autonomous, DnaK-independent fashion. Unfolded proteins bind initially to DnaJ; upon interaction with the DnaJ-bound protein, DnaK hydrolyzes its bound ATP, resulting in the formation of a stable complex. GrpE releases ADP from DnaK; ATP binding to DnaK triggers the release of the substrate protein, thus completing the reaction cycle. Several rounds of ATP-dependent interactions between DnaJ, DnaK and GrpE are required for fully efficient folding. Also involved, together with DnaK and GrpE, in the DNA replication of plasmids through activation of initiation proteins. The chain is Chaperone protein DnaJ from Macrococcus caseolyticus (strain JCSC5402) (Macrococcoides caseolyticum).